A 183-amino-acid chain; its full sequence is Oligoribonuclease (183 aa).

The Exonuclease domain occupies 10-173 (LIWIDLEMTG…ADIRESIAEL (164 aa)). Tyr131 is a catalytic residue.

This sequence belongs to the oligoribonuclease family.

Its subcellular location is the cytoplasm. Functionally, 3'-to-5' exoribonuclease specific for small oligoribonucleotides. The protein is Oligoribonuclease of Idiomarina loihiensis (strain ATCC BAA-735 / DSM 15497 / L2-TR).